We begin with the raw amino-acid sequence, 77 residues long: MSLFGFFKNKGSATTATDRLKLILAKERTLNLPYMEEMRKEIIAVIQKYTKSSDIHFKTLDSNQSVETIEVEIILPK.

This sequence belongs to the MinE family.

Functionally, prevents the cell division inhibition by proteins MinC and MinD at internal division sites while permitting inhibition at polar sites. This ensures cell division at the proper site by restricting the formation of a division septum at the midpoint of the long axis of the cell. The chain is Cell division topological specificity factor from Helicobacter pylori (strain HPAG1).